Reading from the N-terminus, the 229-residue chain is Flagellar L-ring protein (229 aa).

The first 23 residues, 1-23 (MNPLTRVALAVAAFAALVLALSA), serve as a signal peptide directing secretion. Cys24 carries the N-palmitoyl cysteine lipid modification. A lipid anchor (S-diacylglycerol cysteine) is attached at Cys24.

This sequence belongs to the FlgH family. As to quaternary structure, the basal body constitutes a major portion of the flagellar organelle and consists of four rings (L,P,S, and M) mounted on a central rod.

It localises to the cell outer membrane. The protein localises to the bacterial flagellum basal body. Functionally, assembles around the rod to form the L-ring and probably protects the motor/basal body from shearing forces during rotation. This chain is Flagellar L-ring protein, found in Anaeromyxobacter dehalogenans (strain 2CP-1 / ATCC BAA-258).